The chain runs to 464 residues: Glycine receptor subunit alpha-3 (464 aa).

Residues 1-33 (MAHVRHFRTLLSGFYFWEAALLLSLVATKETNS) form the signal peptide. Over 34–255 (ARSRSAPMSP…RFHLERQMGY (222 aa)) the chain is Extracellular. Residue asparagine 71 is glycosylated (N-linked (GlcNAc...) asparagine). An intrachain disulfide couples cysteine 171 to cysteine 185. Zn(2+) contacts are provided by glutamate 225 and aspartate 227. An intrachain disulfide couples cysteine 231 to cysteine 242. Residue 235-240 (YNTGKF) participates in strychnine binding. Histidine 248 contributes to the Zn(2+) binding site. A helical transmembrane segment spans residues 256 to 277 (YLIQMYIPSLLIVILSWVSFWI). Residues 278 to 282 (NMDAA) lie on the Cytoplasmic side of the membrane. The chain crosses the membrane as a helical span at residues 283–303 (PARVALGITTVLTMTTQSSGS). At 304 to 314 (RASLPKVSYVK) the chain is on the extracellular side. Residues 315–335 (AIDIWMAVCLLFVFSALLEYA) traverse the membrane as a helical segment. Residues 336 to 430 (AVNFVSRQHK…FIDRAKKIDT (95 aa)) lie on the Cytoplasmic side of the membrane. Serine 370 carries the phosphoserine modification. At serine 379 the chain carries Phosphoserine; by PKA. The chain crosses the membrane as a helical span at residues 431–451 (ISRACFPLAFLIFNIFYWVIY). Residues 452–464 (KILRHEDIHHQQD) lie on the Extracellular side of the membrane.

It belongs to the ligand-gated ion channel (TC 1.A.9) family. Glycine receptor (TC 1.A.9.3) subfamily. GLRA3 sub-subfamily. As to quaternary structure, homopentamer (in vitro). Heteropentamer composed of GLRA3 and GLRB. Both homopentamers and heteropentamers form functional ion channels, but their characteristics are subtly different. Phosphorylated by PKA; this causes down-regulation of channel activity.

It is found in the postsynaptic cell membrane. The protein localises to the perikaryon. Its subcellular location is the cell projection. The protein resides in the dendrite. It localises to the synapse. It is found in the cell membrane. It catalyses the reaction chloride(in) = chloride(out). Its activity is regulated as follows. Low levels of Zn(2+) ions (1 uM) increase glycine sensitivity and decrease the glycine concentration required for half-maximal channel activity. Channel activity is strongly enhanced by ethanol. Inhibited by picrotoxin. Inhibited by prostaglandin E2, probably via PKA-mediated phosphorylation at Ser-379. In terms of biological role, glycine receptors are ligand-gated chloride channels. Channel opening is triggered by extracellular glycine. Channel characteristics depend on the subunit composition; heteropentameric channels display faster channel closure. Plays an important role in the down-regulation of neuronal excitability. Contributes to the generation of inhibitory postsynaptic currents. Contributes to increased pain perception in response to increased prostaglandin E2 levels. Plays a role in cellular responses to ethanol. This is Glycine receptor subunit alpha-3 (Glra3) from Rattus norvegicus (Rat).